We begin with the raw amino-acid sequence, 508 residues long: Photosystem II CP47 reaction center protein (508 aa).

Helical transmembrane passes span alanine 21 to serine 36, isoleucine 101 to tryptophan 115, glycine 140 to phenylalanine 156, isoleucine 203 to serine 218, valine 237 to valine 252, and serine 457 to arginine 472.

It belongs to the PsbB/PsbC family. PsbB subfamily. PSII is composed of 1 copy each of membrane proteins PsbA, PsbB, PsbC, PsbD, PsbE, PsbF, PsbH, PsbI, PsbJ, PsbK, PsbL, PsbM, PsbT, PsbX, PsbY, PsbZ, Psb30/Ycf12, at least 3 peripheral proteins of the oxygen-evolving complex and a large number of cofactors. It forms dimeric complexes. It depends on Binds multiple chlorophylls. PSII binds additional chlorophylls, carotenoids and specific lipids. as a cofactor.

The protein localises to the plastid. The protein resides in the chloroplast thylakoid membrane. In terms of biological role, one of the components of the core complex of photosystem II (PSII). It binds chlorophyll and helps catalyze the primary light-induced photochemical processes of PSII. PSII is a light-driven water:plastoquinone oxidoreductase, using light energy to abstract electrons from H(2)O, generating O(2) and a proton gradient subsequently used for ATP formation. This Oenothera biennis (German evening primrose) protein is Photosystem II CP47 reaction center protein.